Here is a 220-residue protein sequence, read N- to C-terminus: MTKGILGRKIGMTQVFGENGELIPVTVVEASQNVVLQKKTEEVDGYNAIQVGFEDKQAYKKGSKSNKYANKPAEGHAKKADTAPKRFIREFRNLNVDEYEVGQEVSVDTFETGDIIDVTGVSKGKGFQGAIKRHGQGRGPMAHGSHFHRAPGSVGMASDASKVFKGQKMPGRMGGNTVTVQNLEVVQVDTENSVILVKGNVPGPKKGLVEITTSIKKGNK.

Residues 61–81 (KGSKSNKYANKPAEGHAKKAD) form a disordered region.

The protein belongs to the universal ribosomal protein uL3 family. As to quaternary structure, part of the 50S ribosomal subunit. Forms a cluster with proteins L14 and L19.

Its function is as follows. One of the primary rRNA binding proteins, it binds directly near the 3'-end of the 23S rRNA, where it nucleates assembly of the 50S subunit. The sequence is that of Large ribosomal subunit protein uL3 from Staphylococcus epidermidis (strain ATCC 35984 / DSM 28319 / BCRC 17069 / CCUG 31568 / BM 3577 / RP62A).